Here is a 463-residue protein sequence, read N- to C-terminus: Gamma-aminobutyric acid receptor subunit alpha-5 (463 aa).

The N-terminal stretch at 1 to 25 (MDNGMLSRFIMTQTLLVFCISMTLS) is a signal peptide. The Extracellular segment spans residues 26–260 (SHFGFSQMPT…FHLKRKIGYF (235 aa)). The N-linked (GlcNAc...) asparagine glycan is linked to Asn-45. Position 101 (Arg-101) interacts with 4-aminobutanoate. Asn-145 carries an N-linked (GlcNAc...) asparagine glycan. Thr-164 contacts 4-aminobutanoate. Cysteines 173 and 187 form a disulfide. N-linked (GlcNAc...) asparagine glycosylation is found at Asn-207 and Asn-236. 3 helical membrane passes run 261–281 (VIQT…SFWL), 287–308 (PART…ISAR), and 319–340 (AMDW…EFAT). Over 341-428 (VNYFTKRGWA…TYNSISKIDK (88 aa)) the chain is Cytoplasmic. Residue Lys-355 forms a Glycyl lysine isopeptide (Lys-Gly) (interchain with G-Cter in ubiquitin) linkage. The disordered stretch occupies residues 387-408 (PNIPKEQPPAGTANAPTVSIKA). A helical membrane pass occupies residues 429–449 (MSRIVFPILFGTFNLVYWATY).

This sequence belongs to the ligand-gated ion channel (TC 1.A.9) family. Gamma-aminobutyric acid receptor (TC 1.A.9.5) subfamily. GABRA5 sub-subfamily. As to quaternary structure, heteropentamer, formed by a combination of alpha (GABRA1-6), beta (GABRB1-3), gamma (GABRG1-3), delta (GABRD), epsilon (GABRE), rho (GABRR1-3), pi (GABRP) and theta (GABRQ) chains, each subunit exhibiting distinct physiological and pharmacological properties. As to expression, expressed in brain, in hippocampal pyramidal neurons.

The protein resides in the postsynaptic cell membrane. The protein localises to the cell membrane. It catalyses the reaction chloride(in) = chloride(out). In terms of biological role, alpha subunit of the heteropentameric ligand-gated chloride channel gated by gamma-aminobutyric acid (GABA), a major inhibitory neurotransmitter in the brain. GABA-gated chloride channels, also named GABA(A) receptors (GABAAR), consist of five subunits arranged around a central pore and contain GABA active binding site(s) located at the alpha and beta subunit interface(s). When activated by GABA, GABAARs selectively allow the flow of chloride anions across the cell membrane down their electrochemical gradient. GABAARs containing alpha-5/GABRA5 are mainly extrasynaptic and contribute to the tonic GABAergic inhibition of the hippocampus. Extrasynaptic alpha-5-containing GABAARs in CA1 pyramidal neurons play a role in learning and memory processes. This chain is Gamma-aminobutyric acid receptor subunit alpha-5, found in Mus musculus (Mouse).